The primary structure comprises 86 residues: Small ribosomal subunit protein bS20 (86 aa).

Positions 1–22 (MANIKSAKKRAVQSEKRRKHNA) are enriched in basic residues. The disordered stretch occupies residues 1–28 (MANIKSAKKRAVQSEKRRKHNASGRSMM).

This sequence belongs to the bacterial ribosomal protein bS20 family.

Functionally, binds directly to 16S ribosomal RNA. The chain is Small ribosomal subunit protein bS20 from Serratia proteamaculans (strain 568).